Reading from the N-terminus, the 230-residue chain is Cytidylate kinase (230 aa).

10–18 (GPAGSGKST) contributes to the ATP binding site.

The protein belongs to the cytidylate kinase family. Type 1 subfamily.

The protein resides in the cytoplasm. It carries out the reaction CMP + ATP = CDP + ADP. The enzyme catalyses dCMP + ATP = dCDP + ADP. This is Cytidylate kinase from Leptospira borgpetersenii serovar Hardjo-bovis (strain JB197).